Reading from the N-terminus, the 561-residue chain is DNA ligase B (561 aa).

Catalysis depends on K125, which acts as the N6-AMP-lysine intermediate.

The protein belongs to the NAD-dependent DNA ligase family. LigB subfamily.

It catalyses the reaction NAD(+) + (deoxyribonucleotide)n-3'-hydroxyl + 5'-phospho-(deoxyribonucleotide)m = (deoxyribonucleotide)n+m + AMP + beta-nicotinamide D-nucleotide.. Its function is as follows. Catalyzes the formation of phosphodiester linkages between 5'-phosphoryl and 3'-hydroxyl groups in double-stranded DNA using NAD as a coenzyme and as the energy source for the reaction. The chain is DNA ligase B from Salmonella agona (strain SL483).